Here is a 465-residue protein sequence, read N- to C-terminus: 5-cytosine rRNA methyltransferase nsun-4 (465 aa).

The N-terminal 6 residues, 1-6 (MSCLRQ), are a transit peptide targeting the mitochondrion. Basic and acidic residues predominate over residues 106 to 130 (QAIETKRKSVEEKANRETQKVKHEI). Residues 106–145 (QAIETKRKSVEEKANRETQKVKHEISNPSTSTNTEDSEPD) are disordered. S-adenosyl-L-methionine contacts are provided by residues 260-266 (CAAPGGK), Asp-283, Asp-316, and Asp-335. Cys-390 (nucleophile) is an active-site residue.

It belongs to the class I-like SAM-binding methyltransferase superfamily. RsmB/NOP family.

It localises to the mitochondrion. It catalyses the reaction a cytidine in rRNA + S-adenosyl-L-methionine = a 5-methylcytidine in rRNA + S-adenosyl-L-homocysteine + H(+). The enzyme catalyses a cytidine in tRNA + S-adenosyl-L-methionine = a 5-methylcytidine in tRNA + S-adenosyl-L-homocysteine + H(+). Mitochondrial methyltransferase which methylates cytosine to 5-methylcytosine (m5C) in rRNAs and tRNAs at multiple sites. May play a role in the translation of leucine and proline codons. The sequence is that of 5-cytosine rRNA methyltransferase nsun-4 from Caenorhabditis elegans.